Reading from the N-terminus, the 150-residue chain is Lipoprotein signal peptidase (150 aa).

3 helical membrane-spanning segments follow: residues 8–28, 58–78, and 81–101; these read FYALVGFLVFLDQVTKYLAHA, GFSWLFFLLGIIALIFIGWFL, and TTGSIVFLALLQGGIAGNVFD. Active-site residues include D116 and D132. The helical transmembrane segment at 126–146 threads the bilayer; sequence VVFNIADLFILAGVFGTFLFL.

The protein belongs to the peptidase A8 family.

It localises to the cell membrane. The enzyme catalyses Release of signal peptides from bacterial membrane prolipoproteins. Hydrolyzes -Xaa-Yaa-Zaa-|-(S,diacylglyceryl)Cys-, in which Xaa is hydrophobic (preferably Leu), and Yaa (Ala or Ser) and Zaa (Gly or Ala) have small, neutral side chains.. The protein operates within protein modification; lipoprotein biosynthesis (signal peptide cleavage). This protein specifically catalyzes the removal of signal peptides from prolipoproteins. The polypeptide is Lipoprotein signal peptidase (Tropheryma whipplei (strain Twist) (Whipple's bacillus)).